We begin with the raw amino-acid sequence, 176 residues long: Late lactation protein A (176 aa).

The N-terminal stretch at 1–18 (MRVLFLTISLSLFSIIHA) is a signal peptide. Residues cysteine 78 and cysteine 171 are joined by a disulfide bond.

Belongs to the calycin superfamily. Lipocalin family. Mammary gland specific. Secreted in milk.

Its subcellular location is the secreted. Functionally, probably serves a role in the transport of a small ligand released during the hydrolysis of milk fat. This is Late lactation protein A (LLPA) from Notamacropus eugenii (Tammar wallaby).